Here is a 264-residue protein sequence, read N- to C-terminus: ATP synthase subunit a (264 aa).

6 helical membrane passes run 29-49 (TWHI…LWIF), 87-107 (NALI…MNFM), 134-154 (DLNI…YYSI), 177-197 (IPVN…SLAL), 208-228 (LIFI…SLGV), and 235-255 (LIFH…LTIV).

It belongs to the ATPase A chain family. As to quaternary structure, F-type ATPases have 2 components, CF(1) - the catalytic core - and CF(0) - the membrane proton channel. CF(1) has five subunits: alpha(3), beta(3), gamma(1), delta(1), epsilon(1). CF(0) has three main subunits: a(1), b(2) and c(9-12). The alpha and beta chains form an alternating ring which encloses part of the gamma chain. CF(1) is attached to CF(0) by a central stalk formed by the gamma and epsilon chains, while a peripheral stalk is formed by the delta and b chains.

The protein localises to the cell inner membrane. Functionally, key component of the proton channel; it plays a direct role in the translocation of protons across the membrane. In Shewanella amazonensis (strain ATCC BAA-1098 / SB2B), this protein is ATP synthase subunit a.